Reading from the N-terminus, the 346-residue chain is Methylthioribose-1-phosphate isomerase (346 aa).

Substrate-binding positions include 45–47 (RGA), R87, and Q194. D235 (proton donor) is an active-site residue. 245–246 (NK) is a binding site for substrate.

The protein belongs to the eIF-2B alpha/beta/delta subunits family. MtnA subfamily.

It carries out the reaction 5-(methylsulfanyl)-alpha-D-ribose 1-phosphate = 5-(methylsulfanyl)-D-ribulose 1-phosphate. It functions in the pathway amino-acid biosynthesis; L-methionine biosynthesis via salvage pathway; L-methionine from S-methyl-5-thio-alpha-D-ribose 1-phosphate: step 1/6. Its function is as follows. Catalyzes the interconversion of methylthioribose-1-phosphate (MTR-1-P) into methylthioribulose-1-phosphate (MTRu-1-P). The chain is Methylthioribose-1-phosphate isomerase from Syntrophomonas wolfei subsp. wolfei (strain DSM 2245B / Goettingen).